Here is a 377-residue protein sequence, read N- to C-terminus: UPF0754 membrane protein lin2327 (377 aa).

A run of 2 helical transmembrane segments spans residues 1–21 (MSVL…GAMT) and 357–377 (YLGG…AMWI).

The protein belongs to the UPF0754 family.

The protein localises to the cell membrane. The sequence is that of UPF0754 membrane protein lin2327 from Listeria innocua serovar 6a (strain ATCC BAA-680 / CLIP 11262).